A 303-amino-acid chain; its full sequence is UDP-3-O-acyl-N-acetylglucosamine deacetylase (303 aa).

Positions 78, 237, and 241 each coordinate Zn(2+). His264 functions as the Proton donor in the catalytic mechanism.

This sequence belongs to the LpxC family. The cofactor is Zn(2+).

The enzyme catalyses a UDP-3-O-[(3R)-3-hydroxyacyl]-N-acetyl-alpha-D-glucosamine + H2O = a UDP-3-O-[(3R)-3-hydroxyacyl]-alpha-D-glucosamine + acetate. The protein operates within glycolipid biosynthesis; lipid IV(A) biosynthesis; lipid IV(A) from (3R)-3-hydroxytetradecanoyl-[acyl-carrier-protein] and UDP-N-acetyl-alpha-D-glucosamine: step 2/6. Its function is as follows. Catalyzes the hydrolysis of UDP-3-O-myristoyl-N-acetylglucosamine to form UDP-3-O-myristoylglucosamine and acetate, the committed step in lipid A biosynthesis. The sequence is that of UDP-3-O-acyl-N-acetylglucosamine deacetylase from Cellvibrio japonicus (strain Ueda107) (Pseudomonas fluorescens subsp. cellulosa).